A 431-amino-acid chain; its full sequence is Glucose-1-phosphate adenylyltransferase (431 aa).

Lys-39 is a beta-D-fructose 1,6-bisphosphate binding site. Arg-40, His-46, and Arg-52 together coordinate AMP. Residue Tyr-114 participates in alpha-D-glucose 1-phosphate binding. Arg-130 contributes to the AMP binding site. Alpha-D-glucose 1-phosphate is bound by residues Gly-179, 194-195 (EK), and Ser-212. Positions 370 and 386 each coordinate AMP. Beta-D-fructose 1,6-bisphosphate-binding positions include 419–423 (REMLR) and 429–431 (QER).

This sequence belongs to the bacterial/plant glucose-1-phosphate adenylyltransferase family. In terms of assembly, homotetramer.

The catalysed reaction is alpha-D-glucose 1-phosphate + ATP + H(+) = ADP-alpha-D-glucose + diphosphate. Its pathway is glycan biosynthesis; glycogen biosynthesis. With respect to regulation, allosterically activated by fructose-1,6-bisphosphate (F16BP) and inhibited by AMP. Functionally, involved in the biosynthesis of ADP-glucose, a building block required for the elongation reactions to produce glycogen. Catalyzes the reaction between ATP and alpha-D-glucose 1-phosphate (G1P) to produce pyrophosphate and ADP-Glc. The sequence is that of Glucose-1-phosphate adenylyltransferase from Escherichia fergusonii (strain ATCC 35469 / DSM 13698 / CCUG 18766 / IAM 14443 / JCM 21226 / LMG 7866 / NBRC 102419 / NCTC 12128 / CDC 0568-73).